The sequence spans 419 residues: MSLLNSSLHELDPDVAAAVDAELHRQQSTLEMIASENFAPVAVMEAQGSVLTNKYAEGYPGRRYYGGCEHVDVVEQIAIDRIKALFGAEAANVQPHSGAQANAAAMFALLKPGDTIMGLNLAHGGHLTHGMKINFSGKLYNVVPYHVDESGVVDMEEVERLAKESQPKLIVAGWSAYPRQLDFAAFRRIADEVGAYLMVDMAHFAGLVAAGLHPNPVPHAHVVTTTTHKTLGGPRGGVILSTQELAKKINSAVFPGQQGGPLEHVIAAKAVSFKIAAGEEFKERQQRTLDGARILAERLVQPDVTEVGVSVLSGGTDVHLVLVDLRNSELDGQQAEDRLHELGITVNRNAIPNDPRPPMVTSGLRIGTPALATRGFGAEDFTEVAEIIAAALKPSYDADDLKARVVALAEKFPLYPGLK.

(6S)-5,6,7,8-tetrahydrofolate contacts are provided by residues Leu-121 and 125–127 (GHL). N6-(pyridoxal phosphate)lysine is present on Lys-229.

It belongs to the SHMT family. In terms of assembly, homodimer. It depends on pyridoxal 5'-phosphate as a cofactor.

It localises to the cytoplasm. It carries out the reaction (6R)-5,10-methylene-5,6,7,8-tetrahydrofolate + glycine + H2O = (6S)-5,6,7,8-tetrahydrofolate + L-serine. Its pathway is one-carbon metabolism; tetrahydrofolate interconversion. It participates in amino-acid biosynthesis; glycine biosynthesis; glycine from L-serine: step 1/1. Functionally, catalyzes the reversible interconversion of serine and glycine with tetrahydrofolate (THF) serving as the one-carbon carrier. This reaction serves as the major source of one-carbon groups required for the biosynthesis of purines, thymidylate, methionine, and other important biomolecules. Also exhibits THF-independent aldolase activity toward beta-hydroxyamino acids, producing glycine and aldehydes, via a retro-aldol mechanism. This chain is Serine hydroxymethyltransferase, found in Streptomyces griseus subsp. griseus (strain JCM 4626 / CBS 651.72 / NBRC 13350 / KCC S-0626 / ISP 5235).